A 745-amino-acid chain; its full sequence is 5-methyltetrahydropteroyltriglutamate--homocysteine methyltransferase (745 aa).

Residues 17–20 and lysine 111 each bind 5-methyltetrahydropteroyltri-L-glutamate; that span reads RELK. L-homocysteine-binding positions include 421 to 423 and glutamate 474; that span reads IGS. Residues 421-423 and glutamate 474 contribute to the L-methionine site; that span reads IGS. 5-methyltetrahydropteroyltri-L-glutamate contacts are provided by residues 505–506 and tryptophan 551; that span reads RC. Position 589 (aspartate 589) interacts with L-homocysteine. Aspartate 589 provides a ligand contact to L-methionine. Glutamate 595 contacts 5-methyltetrahydropteroyltri-L-glutamate. The Zn(2+) site is built by histidine 631, cysteine 633, and glutamate 655. Histidine 684 (proton donor) is an active-site residue. Position 716 (cysteine 716) interacts with Zn(2+).

Belongs to the vitamin-B12 independent methionine synthase family. Zn(2+) serves as cofactor.

The enzyme catalyses 5-methyltetrahydropteroyltri-L-glutamate + L-homocysteine = tetrahydropteroyltri-L-glutamate + L-methionine. It functions in the pathway amino-acid biosynthesis; L-methionine biosynthesis via de novo pathway; L-methionine from L-homocysteine (MetE route): step 1/1. Its function is as follows. Catalyzes the transfer of a methyl group from 5-methyltetrahydrofolate to homocysteine resulting in methionine formation. This Thermodesulfovibrio yellowstonii (strain ATCC 51303 / DSM 11347 / YP87) protein is 5-methyltetrahydropteroyltriglutamate--homocysteine methyltransferase.